The sequence spans 197 residues: Phosphoheptose isomerase (197 aa).

Residues 37–197 (MLQCLMNDGK…CIDSVLLEGM (161 aa)) form the SIS domain. Substrate is bound at residue 52-54 (NGG). Residues His-61 and Glu-65 each coordinate Zn(2+). Residues Glu-65, 94-95 (ND), 120-122 (STS), Ser-125, and Gln-175 each bind substrate. Residues Gln-175 and His-183 each coordinate Zn(2+).

The protein belongs to the SIS family. GmhA subfamily. In terms of assembly, homotetramer. Zn(2+) is required as a cofactor.

It localises to the cytoplasm. It catalyses the reaction 2 D-sedoheptulose 7-phosphate = D-glycero-alpha-D-manno-heptose 7-phosphate + D-glycero-beta-D-manno-heptose 7-phosphate. It functions in the pathway carbohydrate biosynthesis; D-glycero-D-manno-heptose 7-phosphate biosynthesis; D-glycero-alpha-D-manno-heptose 7-phosphate and D-glycero-beta-D-manno-heptose 7-phosphate from sedoheptulose 7-phosphate: step 1/1. Functionally, catalyzes the isomerization of sedoheptulose 7-phosphate in D-glycero-D-manno-heptose 7-phosphate. The sequence is that of Phosphoheptose isomerase from Neisseria meningitidis serogroup C (strain 053442).